Here is a 140-residue protein sequence, read N- to C-terminus: Organic hydroperoxide resistance protein-like (140 aa).

This sequence belongs to the OsmC/Ohr family.

In Mycoplasma pneumoniae (strain ATCC 29342 / M129 / Subtype 1) (Mycoplasmoides pneumoniae), this protein is Organic hydroperoxide resistance protein-like.